The following is a 1000-amino-acid chain: Probable coatomer subunit beta' (1000 aa).

WD repeat units lie at residues 13–52, 55–94, 97–136, 140–180, 183–224, 227–266, and 351–391; these read ARSD…LVKS, VCDV…RVHQ, AHSD…AMKQ, GHTH…PNFT, GHEK…CVQT, GHAQ…LETT, and LGSS…NKDF. The tract at residues 863 to 1000 is disordered; the sequence is PRQTETQLKA…MDDLNLDEED (138 aa). Residues 901–915 are compositionally biased toward acidic residues; that stretch reads EPEEEEEQEEFDDDQ. Low complexity predominate over residues 960-969; that stretch reads SASSQQSAQD. Residues 970 to 1000 show a composition bias toward acidic residues; that stretch reads FQDDTQWSDEDFGDAENGDLNMDDLNLDEED.

This sequence belongs to the WD repeat COPB2 family. In terms of assembly, oligomeric complex that consists of at least the alpha, beta, beta', gamma, delta, epsilon and zeta subunits.

The protein localises to the cytoplasm. Its subcellular location is the golgi apparatus membrane. It is found in the cytoplasmic vesicle. The protein resides in the COPI-coated vesicle membrane. In terms of biological role, the coatomer is a cytosolic protein complex that binds to dilysine motifs and reversibly associates with Golgi non-clathrin-coated vesicles, which further mediate biosynthetic protein transport from the ER, via the Golgi up to the trans Golgi network. Coatomer complex is required for budding from Golgi membranes, and is essential for the retrograde Golgi-to-ER transport of dilysine-tagged proteins. The polypeptide is Probable coatomer subunit beta' (copb-2) (Caenorhabditis elegans).